Here is a 314-residue protein sequence, read N- to C-terminus: Probable manganese-dependent inorganic pyrophosphatase (314 aa).

Mn(2+) is bound by residues His7, Asp11, Asp13, Asp72, His94, and Asp146.

The protein belongs to the PPase class C family. Requires Mn(2+) as cofactor.

The protein resides in the cytoplasm. It catalyses the reaction diphosphate + H2O = 2 phosphate + H(+). This chain is Probable manganese-dependent inorganic pyrophosphatase (ppaC), found in Deinococcus radiodurans (strain ATCC 13939 / DSM 20539 / JCM 16871 / CCUG 27074 / LMG 4051 / NBRC 15346 / NCIMB 9279 / VKM B-1422 / R1).